A 492-amino-acid polypeptide reads, in one-letter code: MRTVLLSKHDELYLEKCAQENQFSYGIIVGHQADLTKSVVVHLARNNEEDADLEDLSEVRLTISDINSQALASQWLSASKMCPGSFDVIGIFVSSVRSDVVNEQSAEFKNAKKLFSDIYDLLLKSNSSFGVYTTDIAQTDFVFLSYSLADKKVLCKNYSYGNGGTFTNMEFRFVDKPFEWIQLECSYDFDDVLPILDSSRRVNIEDQFQSMIVSVRKNLLASEVFLQNEVVEDTIDLQAYIKKKKTKVDKLQPTSTTGGTATASSNTTDSLPRLASEGIIGGTETIRASIVLPMKCQLSKPTDIKVREFSGTLHMSGIITSKVFCNPRNSIADVKRFLRDDVLRSLITRIQVYCDGLTDPYVTNEALYISEPPRRVFFSLPSEGPSASVGAVVQFSEYLFRGEAPTVVVAQAKQILDVDLDPETISVEAEGLPDDTHFNNCKMDADCIDDSGIMTSSMPKPELSRSLYMVGIAVALLVLLSSVALHFVLAER.

The tract at residues 251-270 (LQPTSTTGGTATASSNTTDS) is disordered. Residues 254-268 (TSTTGGTATASSNTT) are compositionally biased toward low complexity. Residues 469-489 (MVGIAVALLVLLSSVALHFVL) traverse the membrane as a helical segment.

This sequence belongs to the ODR-4 family.

Its subcellular location is the membrane. Functionally, may play a role in the trafficking of a subset of G-protein coupled receptors. This is Protein odr-4 homolog from Drosophila melanogaster (Fruit fly).